A 177-amino-acid polypeptide reads, in one-letter code: Adenine phosphoribosyltransferase (177 aa).

It belongs to the purine/pyrimidine phosphoribosyltransferase family. As to quaternary structure, homodimer.

The protein localises to the cytoplasm. The enzyme catalyses AMP + diphosphate = 5-phospho-alpha-D-ribose 1-diphosphate + adenine. It functions in the pathway purine metabolism; AMP biosynthesis via salvage pathway; AMP from adenine: step 1/1. Functionally, catalyzes a salvage reaction resulting in the formation of AMP, that is energically less costly than de novo synthesis. This is Adenine phosphoribosyltransferase from Chlorobium chlorochromatii (strain CaD3).